We begin with the raw amino-acid sequence, 141 residues long: Nucleoside diphosphate kinase (141 aa).

K11, F59, R87, T93, R104, and N114 together coordinate ATP. H117 functions as the Pros-phosphohistidine intermediate in the catalytic mechanism.

The protein belongs to the NDK family. As to quaternary structure, homotetramer. The cofactor is Mg(2+).

It is found in the cytoplasm. The enzyme catalyses a 2'-deoxyribonucleoside 5'-diphosphate + ATP = a 2'-deoxyribonucleoside 5'-triphosphate + ADP. It catalyses the reaction a ribonucleoside 5'-diphosphate + ATP = a ribonucleoside 5'-triphosphate + ADP. Functionally, major role in the synthesis of nucleoside triphosphates other than ATP. The ATP gamma phosphate is transferred to the NDP beta phosphate via a ping-pong mechanism, using a phosphorylated active-site intermediate. This chain is Nucleoside diphosphate kinase, found in Stenotrophomonas maltophilia (strain R551-3).